We begin with the raw amino-acid sequence, 782 residues long: Isoamylase 3, chloroplastic (782 aa).

The N-terminal 68 residues, 1–68 (MDSIGINRAP…EKVRRFDSVR (68 aa)), are a transit peptide targeting the chloroplast. Over residues 68 to 81 (RSTTARAQNGNAGR) the composition is skewed to polar residues. A disordered region spans residues 68-88 (RSTTARAQNGNAGRSMTEERG). The active-site Nucleophile is aspartate 445. The Proton donor role is filled by glutamate 482.

It belongs to the glycosyl hydrolase 13 family. Expressed in leaves. Expressed at low levels in developing endosperm.

Its subcellular location is the plastid. It is found in the chloroplast. The protein resides in the amyloplast. The catalysed reaction is Hydrolysis of (1-&gt;6)-alpha-D-glucosidic branch linkages in glycogen, amylopectin and their beta-limit dextrins.. In terms of biological role, starch-debranching enzyme that plays a role in the degradation of transitory starch during the night in leaf blades, facilitates the formation of spherical amyloplasts containing compound granules in the endosperm, and affects morphological characteristics of plastids. The sequence is that of Isoamylase 3, chloroplastic from Oryza sativa subsp. japonica (Rice).